The sequence spans 1184 residues: Fibulin-2 (1184 aa).

An N-terminal signal peptide occupies residues 1 to 27 (MVLLWEPAGAWLALGLALALGPSVAAA). The interval 28–177 (APRQDCTGVE…ELICYQLPGC (150 aa)) is subdomain NA (Cys-rich). The n stretch occupies residues 28 to 444 (APRQDCTGVE…EGSTKDLIET (417 aa)). The interval 178-444 (HGNFSDAEEG…EGSTKDLIET (267 aa)) is subdomain NB (Cys-free). An N-linked (GlcNAc...) asparagine glycan is attached at asparagine 180. Disordered regions lie at residues 221-293 (VQAG…MAVT) and 399-437 (IPPT…PEGS). Gly residues predominate over residues 224–236 (GAGGPPAALGGGS). The segment covering 252 to 261 (PRPTAAAALG) has biased composition (low complexity). Positions 276 to 288 (DSEEEEEEEEERE) are enriched in acidic residues. Serine 277 carries the phosphoserine modification. A compositionally biased stretch (polar residues) spans 423-436 (PNSVHSIPRSSPEG). 38 disulfide bridges follow: cysteine 445–cysteine 472, cysteine 446–cysteine 479, cysteine 459–cysteine 480, cysteine 489–cysteine 518, cysteine 502–cysteine 519, cysteine 521–cysteine 545, cysteine 522–cysteine 552, cysteine 535–cysteine 553, cysteine 608–cysteine 620, cysteine 616–cysteine 629, cysteine 631–cysteine 644, cysteine 683–cysteine 693, cysteine 689–cysteine 702, cysteine 704–cysteine 717, cysteine 723–cysteine 736, cysteine 730–cysteine 745, cysteine 751–cysteine 762, cysteine 768–cysteine 781, cysteine 775–cysteine 790, cysteine 796–cysteine 808, cysteine 814–cysteine 827, cysteine 821–cysteine 836, cysteine 843–cysteine 856, cysteine 862–cysteine 875, cysteine 869–cysteine 884, cysteine 886–cysteine 899, cysteine 905–cysteine 917, cysteine 913–cysteine 926, cysteine 928–cysteine 941, cysteine 947–cysteine 956, cysteine 952–cysteine 965, cysteine 967–cysteine 980, cysteine 986–cysteine 998, cysteine 994–cysteine 1007, cysteine 1009–cysteine 1023, cysteine 1029–cysteine 1042, cysteine 1036–cysteine 1051, and cysteine 1056–cysteine 1068. Anaphylatoxin-like domains lie at 445–480 (CCAA…RHCC), 488–519 (SCMA…KQCC), and 521–553 (CCGL…LSCC). An N-linked (GlcNAc...) asparagine glycan is attached at asparagine 507. Residues 604-645 (DQDECLLLPGELCQHLCINTVGSYHCACFPGFSLQDDGRTCR) form the EGF-like 1; calcium-binding domain. An EGF-like 2 domain is found at 679–718 (QPNTCKDNGPCKQVCSTVGGSAICSCFPGYAIMADGVSCE). One can recognise an EGF-like 3; calcium-binding domain in the interval 719–763 (DINECVTDLHTCSRGEHCVNTLGSFHCYKALTCEPGYALKDGECE). The EGF-like 4; calcium-binding domain maps to 764–809 (DVDECAMGTHTCQPGFLCQNTKGSFYCQARQRCMDGFLQDPEGNCV). The 48-residue stretch at 810-857 (DINECTSLSEPCRPGFSCINTVGSYTCQRNPLICARGYHASDDGTKCV) folds into the EGF-like 5; calcium-binding domain. One can recognise an EGF-like 6; calcium-binding domain in the interval 858–900 (DVNECETGVHRCGEGQVCHNLPGSYRCDCKAGFQRDAFGRGCI). One can recognise an EGF-like 7; calcium-binding domain in the interval 901–942 (DVNECWASPGRLCQHTCENTLGSYRCSCASGFLLAADGKRCE). An EGF-like 8; calcium-binding domain is found at 943–981 (DVNECEAQRCSQECANIYGSYQCYCRQGYQLAEDGHTCT). In terms of domain architecture, EGF-like 9; calcium-binding spans 982–1024 (DIDECAQGAGILCTFRCLNVPGSYQCACPEQGYTMTANGRSCK). Positions 1025-1069 (DVDECALGTHNCSEAETCHNIQGSFRCLRFECPPNYVQVSKTKCE) constitute an EGF-like 10; calcium-binding domain. N-linked (GlcNAc...) asparagine glycosylation occurs at asparagine 1035. Residues 1070 to 1184 (RTTCHDFLEC…MHIFFTTFAL (115 aa)) form a domain III region.

Belongs to the fibulin family. Homotrimer; disulfide-linked. Interacts with LAMA2. Interacts with FBN1 (via N-terminal domain). Forms a ternary complex with ELN and FBN1. O-glycosylated with core 1 or possibly core 8 glycans. It is unsure if the O-glycosylation is on Thr-347 or Ser-348. Component of both basement membranes and other connective tissues. Expressed in heart, placenta and ovary.

The protein localises to the secreted. It is found in the extracellular space. It localises to the extracellular matrix. Its binding to fibronectin and some other ligands is calcium dependent. May act as an adapter that mediates the interaction between FBN1 and ELN. This is Fibulin-2 (FBLN2) from Homo sapiens (Human).